A 502-amino-acid polypeptide reads, in one-letter code: L-arabinose isomerase (502 aa).

Mn(2+) is bound by residues E307, E334, H351, and H450.

Belongs to the arabinose isomerase family. Mn(2+) serves as cofactor.

It carries out the reaction beta-L-arabinopyranose = L-ribulose. The protein operates within carbohydrate degradation; L-arabinose degradation via L-ribulose; D-xylulose 5-phosphate from L-arabinose (bacterial route): step 1/3. In terms of biological role, catalyzes the conversion of L-arabinose to L-ribulose. This Nocardioides sp. (strain ATCC BAA-499 / JS614) protein is L-arabinose isomerase.